The chain runs to 405 residues: Deoxyguanosinetriphosphate triphosphohydrolase-like protein (405 aa).

The 145-residue stretch at 75 to 219 (RLTHTIEVAQ…AAIADDIAYN (145 aa)) folds into the HD domain.

This sequence belongs to the dGTPase family. Type 2 subfamily.

This chain is Deoxyguanosinetriphosphate triphosphohydrolase-like protein, found in Rhizobium meliloti (strain 1021) (Ensifer meliloti).